The chain runs to 1100 residues: ATP-dependent DNA helicase mph1 (1100 aa).

Residues 1–21 show a composition bias toward acidic residues; it reads MSDSDDYLQDDPDDQAFDDFA. The interval 1–250 is disordered; sequence MSDSDDYLQD…RPSSFMQSSN (250 aa). Residues 38–61 show a composition bias toward low complexity; sequence RNQTRNTTSRRNEDNSVASDSDSF. A compositionally biased stretch (basic and acidic residues) spans 84–94; the sequence is FADHPENEASS. Positions 104–117 are enriched in polar residues; that stretch reads NNPQENIFVTQLTQ. The span at 135-146 shows a compositional bias: pro residues; it reads PPPPPPPAPTKP. Composition is skewed to polar residues over residues 182 to 191 and 200 to 209; these read RLSFSTAQNS and NAPTNTAQTE. The span at 212 to 223 shows a compositional bias: acidic residues; it reads DFLDDIPDDAFD. Residues 237–249 show a composition bias toward low complexity; the sequence is SNSSRPSSFMQSS. Residues 317–485 form the Helicase ATP-binding domain; it reads ITQKGLFHNL…AVIDGLEISK (169 aa). Residue 330–337 participates in ATP binding; that stretch reads LPTGLGKT. The DEAH box signature appears at 433-436; sequence DEAH. The Helicase C-terminal domain maps to 655–829; that stretch reads YLKQVVLNHF…GTRFTFHDDK (175 aa). 2 disordered regions span residues 850–913 and 1003–1100; these read PEEN…PEPV and RRPA…LGRR. Basic residues-rich tracts occupy residues 863–875 and 1019–1028; these read RRGR…PKKF and GNKKRLRKGR. Positions 1053–1066 are enriched in polar residues; it reads QPISPEQLLSSFTD. The segment covering 1082–1092 has biased composition (acidic residues); it reads LELDADFEAPD.

The protein belongs to the DEAD box helicase family. DEAH subfamily. FANCM sub-subfamily. Interacts with the MHF histone-fold complex to form the FANCM-MHF complex.

The protein localises to the nucleus. It catalyses the reaction ATP + H2O = ADP + phosphate + H(+). Functionally, ATP-dependent DNA helicase involved in DNA damage repair by homologous recombination and in genome maintenance. Capable of unwinding D-loops. Plays a role in limiting crossover recombinants during mitotic DNA double-strand break (DSB) repair. Component of a FANCM-MHF complex which promotes gene conversion at blocked replication forks, probably by reversal of the stalled fork. This chain is ATP-dependent DNA helicase mph1, found in Aspergillus terreus (strain NIH 2624 / FGSC A1156).